A 57-amino-acid chain; its full sequence is Small ribosomal subunit protein eS31 (57 aa).

Positions 29, 32, 47, and 50 each coordinate Zn(2+). The segment at 29–50 adopts a C4-type zinc-finger fold; sequence CSRCGKGTYMSEHKDRNTCGKC.

This sequence belongs to the eukaryotic ribosomal protein eS31 family. Part of the 30S ribosomal subunit. Zn(2+) is required as a cofactor.

This Nitrosopumilus maritimus (strain SCM1) protein is Small ribosomal subunit protein eS31.